Here is a 144-residue protein sequence, read N- to C-terminus: uncharacterized protein (144 aa).

This is an uncharacterized protein from Methanocaldococcus jannaschii (strain ATCC 43067 / DSM 2661 / JAL-1 / JCM 10045 / NBRC 100440) (Methanococcus jannaschii).